The sequence spans 34 residues: Protamine-Z1/Z2 (34 aa).

Residues 1-34 (PRRRRRSSRPVRRRRRYRRSTAARRRRRVVRRRR) are disordered.

As to expression, testis.

It localises to the nucleus. The protein resides in the chromosome. Protamines substitute for histones in the chromatin of sperm during the haploid phase of spermatogenesis. They compact sperm DNA into a highly condensed, stable and inactive complex. The polypeptide is Protamine-Z1/Z2 (Sarda orientalis (Striped bonito)).